A 359-amino-acid polypeptide reads, in one-letter code: Probable ribonucleotide transport ATP-binding protein mkl (359 aa).

Residues 28 to 264 (IEVNGLTKSF…DEPVVRQFLN (237 aa)) form the ABC transporter domain. 60 to 67 (GPSGTGKS) lines the ATP pocket.

This sequence belongs to the ABC transporter superfamily.

Not known, could be involved in the transport of ribonucleotides. In Mycobacterium bovis (strain ATCC BAA-935 / AF2122/97), this protein is Probable ribonucleotide transport ATP-binding protein mkl (mkl).